Here is a 111-residue protein sequence, read N- to C-terminus: Thioredoxin 2 (111 aa).

Residues 2–109 form the Thioredoxin domain; it reads SKGVITITDA…LLSFLDTHLN (108 aa). Residues C33 and C36 are joined by a disulfide bond.

It belongs to the thioredoxin family.

Its function is as follows. Participates in various redox reactions through the reversible oxidation of its active center dithiol to a disulfide and catalyzes dithiol-disulfide exchange reactions. This chain is Thioredoxin 2 (trxB), found in Nostoc sp. (strain PCC 7120 / SAG 25.82 / UTEX 2576).